A 201-amino-acid chain; its full sequence is Small ribosomal subunit protein uS4 (201 aa).

The region spanning 103-167 (RRLQTIVTKK…SKIPQVLEKT (65 aa)) is the S4 RNA-binding domain. Positions 163–201 (VLEKTKSEAPAEETVEAPAEETVEAPAEEKKEESPSTES) are disordered. Over residues 172 to 185 (PAEETVEAPAEETV) the composition is skewed to acidic residues. Over residues 189-201 (AEEKKEESPSTES) the composition is skewed to basic and acidic residues.

Belongs to the universal ribosomal protein uS4 family. Part of the 30S ribosomal subunit. Contacts protein S5. The interaction surface between S4 and S5 is involved in control of translational fidelity.

One of the primary rRNA binding proteins, it binds directly to 16S rRNA where it nucleates assembly of the body of the 30S subunit. Functionally, with S5 and S12 plays an important role in translational accuracy. The sequence is that of Small ribosomal subunit protein uS4 from Nitrosopumilus maritimus (strain SCM1).